The sequence spans 137 residues: Transcription antitermination protein NusB (137 aa).

It belongs to the NusB family.

Functionally, involved in transcription antitermination. Required for transcription of ribosomal RNA (rRNA) genes. Binds specifically to the boxA antiterminator sequence of the ribosomal RNA (rrn) operons. The chain is Transcription antitermination protein NusB from Borreliella afzelii (strain PKo) (Borrelia afzelii).